Consider the following 220-residue polypeptide: UPF0319 protein YccT (220 aa).

The N-terminal stretch at 1 to 20 is a signal peptide; the sequence is MKTGALTTFLALCLPVTVFA.

The protein belongs to the UPF0319 family.

The polypeptide is UPF0319 protein YccT (Salmonella choleraesuis (strain SC-B67)).